A 136-amino-acid polypeptide reads, in one-letter code: Aspartate 1-decarboxylase (136 aa).

Ser25 functions as the Schiff-base intermediate with substrate; via pyruvic acid in the catalytic mechanism. Pyruvic acid (Ser) is present on Ser25. Thr57 is a binding site for substrate. Catalysis depends on Tyr58, which acts as the Proton donor. 73 to 75 (GAA) contacts substrate.

It belongs to the PanD family. As to quaternary structure, heterooctamer of four alpha and four beta subunits. Pyruvate serves as cofactor. Post-translationally, is synthesized initially as an inactive proenzyme, which is activated by self-cleavage at a specific serine bond to produce a beta-subunit with a hydroxyl group at its C-terminus and an alpha-subunit with a pyruvoyl group at its N-terminus.

The protein localises to the cytoplasm. It carries out the reaction L-aspartate + H(+) = beta-alanine + CO2. Its pathway is cofactor biosynthesis; (R)-pantothenate biosynthesis; beta-alanine from L-aspartate: step 1/1. Its function is as follows. Catalyzes the pyruvoyl-dependent decarboxylation of aspartate to produce beta-alanine. The protein is Aspartate 1-decarboxylase of Corynebacterium efficiens (strain DSM 44549 / YS-314 / AJ 12310 / JCM 11189 / NBRC 100395).